The sequence spans 543 residues: Chaperonin GroEL 2 (543 aa).

Residues 29–32, 86–90, glycine 413, 477–479, and aspartate 493 contribute to the ATP site; these read TLGP, DGTTT, and DAA. The segment at 523-543 is disordered; it reads PQEPEPAAGGHGHGHQHGPGF. Over residues 534–543 the composition is skewed to basic residues; it reads GHGHQHGPGF.

Belongs to the chaperonin (HSP60) family. In terms of assembly, forms a cylinder of 14 subunits composed of two heptameric rings stacked back-to-back. Interacts with the co-chaperonin GroES.

Its subcellular location is the cytoplasm. The catalysed reaction is ATP + H2O + a folded polypeptide = ADP + phosphate + an unfolded polypeptide.. Together with its co-chaperonin GroES, plays an essential role in assisting protein folding. The GroEL-GroES system forms a nano-cage that allows encapsulation of the non-native substrate proteins and provides a physical environment optimized to promote and accelerate protein folding. The polypeptide is Chaperonin GroEL 2 (Salinispora tropica (strain ATCC BAA-916 / DSM 44818 / JCM 13857 / NBRC 105044 / CNB-440)).